Here is a 332-residue protein sequence, read N- to C-terminus: 2,3-diketo-L-gulonate reductase (332 aa).

Catalysis depends on H44, which acts as the Proton donor. NAD(+) contacts are provided by residues 168 to 174 (ITMVDMS), 224 to 225 (WK), and 304 to 306 (GHE).

This sequence belongs to the LDH2/MDH2 oxidoreductase family. DlgD subfamily. In terms of assembly, homodimer.

It localises to the cytoplasm. The enzyme catalyses 3-dehydro-L-gulonate + NAD(+) = 2,3-dioxo-L-gulonate + NADH + H(+). The catalysed reaction is 3-dehydro-L-gulonate + NADP(+) = 2,3-dioxo-L-gulonate + NADPH + H(+). Functionally, catalyzes the reduction of 2,3-diketo-L-gulonate in the presence of NADH, to form 3-keto-L-gulonate. The sequence is that of 2,3-diketo-L-gulonate reductase from Klebsiella pneumoniae (strain 342).